The chain runs to 1600 residues: E3 ubiquitin-protein ligase listerin (1600 aa).

HEAT repeat units lie at residues 31–65 (SSVP…CVKK), 114–150 (KTLP…DSDQ), 161–202 (GKLL…SSMA), 245–288 (YQLV…DLLR), 291–344 (ISVT…PDYA), 526–606 (RNYK…AALS), 853–904 (YTTN…DIRT), 962–986 (YASK…GAKF), 1045–1083 (LYNV…WVQT), 1289–1324 (VDVR…KADN), and 1325–1369 (SLNA…EEGT). The RING-type; degenerate zinc finger occupies 1537 to 1583 (CPICYAVVSADKKLPDKRCSTCNNLFHRLCLYKWFQNSNKNTCPLCR).

Belongs to the LTN1 family. In terms of assembly, component of the ribosome quality control complex (RQC), composed of the E3 ubiquitin ligase RKR1/LTN1, RQC1 and RQC2, as well as CDC48 and its ubiquitin-binding cofactors associated with the 60S ribosomal subunits.

It is found in the nucleus. The protein resides in the cytoplasm. It localises to the cytosol. The enzyme catalyses S-ubiquitinyl-[E2 ubiquitin-conjugating enzyme]-L-cysteine + [acceptor protein]-L-lysine = [E2 ubiquitin-conjugating enzyme]-L-cysteine + N(6)-ubiquitinyl-[acceptor protein]-L-lysine.. The protein operates within protein modification; protein ubiquitination. Its function is as follows. E3 ubiquitin-protein ligase component of the ribosome quality control complex (RQC), a ribosome-associated complex that mediates ubiquitination and extraction of incompletely synthesized nascent chains for proteasomal degradation. Mediates ubiquitination of proteins derived from mRNAs lacking stop codons (non-stop proteins) and other translation arrest products induced by poly-lysine sequences and tandem rare codons. Ubiquitination leads to CDC48 recruitment for extraction and degradation of the incomplete translation product. May indirectly play a role in chromatin function and transcription. This is E3 ubiquitin-protein ligase listerin (rkr-1) from Neurospora crassa (strain ATCC 24698 / 74-OR23-1A / CBS 708.71 / DSM 1257 / FGSC 987).